Reading from the N-terminus, the 420-residue chain is Histidine--tRNA ligase, chloroplastic (420 aa).

Belongs to the class-II aminoacyl-tRNA synthetase family.

It is found in the plastid. The protein localises to the chloroplast. The enzyme catalyses tRNA(His) + L-histidine + ATP = L-histidyl-tRNA(His) + AMP + diphosphate + H(+). The protein is Histidine--tRNA ligase, chloroplastic of Gracilaria tenuistipitata var. liui (Red alga).